A 130-amino-acid polypeptide reads, in one-letter code: Protein YoeA (130 aa).

Residues 1 to 28 (MLYNIPCRIYILSTLSLCISGIVSTATA) form the signal peptide. One can recognise a TBDR plug domain in the interval 51–130 (NLWESPATIQ…RCRRYSRGER (80 aa)).

This sequence belongs to the TonB-dependent receptor family.

In Escherichia coli (strain K12), this protein is Protein YoeA (yoeA).